We begin with the raw amino-acid sequence, 319 residues long: Formimidoylglutamase (319 aa).

Residues His-131, Asp-154, His-156, Asp-158, Cys-248, and Asp-250 each coordinate Mn(2+).

Belongs to the arginase family. It depends on Mn(2+) as a cofactor.

The catalysed reaction is N-formimidoyl-L-glutamate + H2O = formamide + L-glutamate. Its pathway is amino-acid degradation; L-histidine degradation into L-glutamate; L-glutamate from N-formimidoyl-L-glutamate (hydrolase route): step 1/1. Functionally, catalyzes the conversion of N-formimidoyl-L-glutamate to L-glutamate and formamide. In Legionella pneumophila (strain Paris), this protein is Formimidoylglutamase.